Here is a 279-residue protein sequence, read N- to C-terminus: Large ribosomal subunit protein uL2 (279 aa).

Positions 216-279 are disordered; the sequence is KRPSVRGVVM…IQKRKRNRNR (64 aa). Residues 270-279 show a composition bias toward basic residues; that stretch reads IQKRKRNRNR.

It belongs to the universal ribosomal protein uL2 family. As to quaternary structure, part of the 50S ribosomal subunit. Forms a bridge to the 30S subunit in the 70S ribosome.

One of the primary rRNA binding proteins. Required for association of the 30S and 50S subunits to form the 70S ribosome, for tRNA binding and peptide bond formation. It has been suggested to have peptidyltransferase activity; this is somewhat controversial. Makes several contacts with the 16S rRNA in the 70S ribosome. The protein is Large ribosomal subunit protein uL2 of Leptospira interrogans serogroup Icterohaemorrhagiae serovar copenhageni (strain Fiocruz L1-130).